The sequence spans 837 residues: Intestinal mucin-like protein (837 aa).

4 repeat units span residues 17 to 27 (PSTPSTPPPST), 28 to 38 (PTTPTSSQTTT), 39 to 50 (PSTPSTTSSKST), and 51 to 62 (PSTPQSTSSKST). The tract at residues 17–70 (PSTPSTPPPSTPTTPTSSQTTTPSTPSTTSSKSTPSTPQSTSSKSTPSTPPKTT) is 5 X 11 AA approximate tandem repeats. The segment at 17–75 (PSTPSTPPPSTPTTPTSSQTTTPSTPSTTSSKSTPSTPQSTSSKSTPSTPPKTTLPGCL) is disordered. A compositionally biased stretch (low complexity) spans 29-70 (TTPTSSQTTTPSTPSTTSSKSTPSTPQSTSSKSTPSTPPKTT). The 5; truncated repeat unit spans residues 63–70 (PSTPPKTT). Asn91 and Asn164 each carry an N-linked (GlcNAc...) asparagine glycan. Residues 141–324 (CYCTGWGDPH…VNDPSKPHCP (184 aa)) form the VWFD domain. Intrachain disulfides connect Cys143-Cys284, Cys165-Cys323, and Cys189-Cys197. The probably important for disulfide-bond mediated mucin polymerization (link domain) stretch occupies residues 149 to 837 (PHFVTFDGLY…RSSPRLLGRK (689 aa)). 12 N-linked (GlcNAc...) asparagine glycosylation sites follow: Asn278, Asn289, Asn344, Asn410, Asn444, Asn515, Asn538, Asn612, Asn627, Asn695, Asn727, and Asn749. VWFC domains lie at 472–543 (CGCV…TSCK) and 581–648 (GVCV…KKCQ). 4 disulfide bridges follow: Cys732–Cys779, Cys746–Cys793, Cys755–Cys809, and Cys759–Cys811. The region spanning 732 to 817 (CSAIPVMKEI…SCLCQGTVCE (86 aa)) is the CTCK domain.

Multimeric. In terms of tissue distribution, coats the epithelia of the intestines.

Its subcellular location is the secreted. This chain is Intestinal mucin-like protein, found in Rattus norvegicus (Rat).